The primary structure comprises 163 residues: Small ribosomal subunit protein uS5 (163 aa).

In terms of domain architecture, S5 DRBM spans 8–71 (LVEKIVYLNR…ERAKKDMVQI (64 aa)).

The protein belongs to the universal ribosomal protein uS5 family. As to quaternary structure, part of the 30S ribosomal subunit. Contacts proteins S4 and S8.

In terms of biological role, with S4 and S12 plays an important role in translational accuracy. Its function is as follows. Located at the back of the 30S subunit body where it stabilizes the conformation of the head with respect to the body. This chain is Small ribosomal subunit protein uS5, found in Nitratidesulfovibrio vulgaris (strain DSM 19637 / Miyazaki F) (Desulfovibrio vulgaris).